Consider the following 254-residue polypeptide: UPF0246 protein FTH_1656 (254 aa).

This sequence belongs to the UPF0246 family.

This Francisella tularensis subsp. holarctica (strain OSU18) protein is UPF0246 protein FTH_1656.